A 440-amino-acid chain; its full sequence is Histidinol dehydrogenase homolog 2 (440 aa).

Histidine 265 contributes to the Zn(2+) binding site. Residues glutamate 333 and histidine 334 each act as proton acceptor in the active site. Histidine 426 serves as a coordination point for Zn(2+).

Belongs to the histidinol dehydrogenase family. Zn(2+) serves as cofactor.

This chain is Histidinol dehydrogenase homolog 2, found in Mesorhizobium japonicum (strain LMG 29417 / CECT 9101 / MAFF 303099) (Mesorhizobium loti (strain MAFF 303099)).